The chain runs to 222 residues: Glutathione transferase GST 23 (222 aa).

In terms of domain architecture, GST N-terminal spans 4 to 83 (KGVKVLGMWA…YIDEVWKGGY (80 aa)). Residues S14, K41, V55, and 67–68 (ES) contribute to the glutathione site. The GST C-terminal domain occupies 89 to 220 (DPYERAQARF…ANKARREQLL (132 aa)).

Belongs to the GST superfamily.

The catalysed reaction is RX + glutathione = an S-substituted glutathione + a halide anion + H(+). In terms of biological role, involved in multiple disease resistance (MDR). In Zea mays (Maize), this protein is Glutathione transferase GST 23.